A 219-amino-acid polypeptide reads, in one-letter code: RING finger protein nenya (219 aa).

The RING-type zinc finger occupies 6-48 (CNKCFRRRNVEPTLIFHMTQCQHVLCASCLSESSTDKKCPLCK). Residues 161–181 (NQARGLRPRTPSVTTSDNTQS) are disordered.

In terms of assembly, may interact with itself, with narya and vilya through its RING-type zinc finger.

Functionally, required for the formation of DNA double-strand breaks together with narya and vilya during the meiotic recombination process. Plays a redundant role with narya in chromosome segregation during female meiosis. This Drosophila melanogaster (Fruit fly) protein is RING finger protein nenya.